We begin with the raw amino-acid sequence, 58 residues long: UPF0391 membrane protein MADE_1011595 (58 aa).

Helical transmembrane passes span 4–24 (WAITFFIIAIIAAVFGFGGIA) and 27–47 (ATGIAQFLFFVFIALLVISLI).

It belongs to the UPF0391 family.

The protein resides in the cell membrane. The chain is UPF0391 membrane protein MADE_1011595 from Alteromonas mediterranea (strain DSM 17117 / CIP 110805 / LMG 28347 / Deep ecotype).